The primary structure comprises 546 residues: 2-isopropylmalate synthase (546 aa).

The 264-residue stretch at 8–271 folds into the Pyruvate carboxyltransferase domain; that stretch reads ILIFDTTLRD…NSFFKRNPDS (264 aa). Mn(2+) is bound by residues Asp17, His208, His210, and Asn244. Positions 408-546 are regulatory domain; that stretch reads QLSLVQVSCG…NNTYISNPAN (139 aa).

Belongs to the alpha-IPM synthase/homocitrate synthase family. LeuA type 1 subfamily. Homodimer. It depends on Mn(2+) as a cofactor.

The protein localises to the cytoplasm. The catalysed reaction is 3-methyl-2-oxobutanoate + acetyl-CoA + H2O = (2S)-2-isopropylmalate + CoA + H(+). The protein operates within amino-acid biosynthesis; L-leucine biosynthesis; L-leucine from 3-methyl-2-oxobutanoate: step 1/4. Catalyzes the condensation of the acetyl group of acetyl-CoA with 3-methyl-2-oxobutanoate (2-ketoisovalerate) to form 3-carboxy-3-hydroxy-4-methylpentanoate (2-isopropylmalate). The protein is 2-isopropylmalate synthase of Prochlorococcus marinus (strain MIT 9301).